The sequence spans 404 residues: Translation initiation factor eIF2B subunit gamma (404 aa).

The protein belongs to the eIF-2B gamma/epsilon subunits family. As to quaternary structure, component of the translation initiation factor 2B (eIF2B) complex which is a heterodecamer of two sets of five different subunits: alpha, beta, gamma, delta and epsilon. Subunits alpha, beta and delta comprise a regulatory subcomplex and subunits epsilon and gamma comprise a catalytic subcomplex. Within the complex, the hexameric regulatory complex resides at the center, with the two heterodimeric catalytic subcomplexes bound on opposite sides.

It is found in the cytoplasm. It localises to the cytosol. Functionally, acts as a component of the translation initiation factor 2B (eIF2B) complex, which catalyzes the exchange of GDP for GTP on the eukaryotic initiation factor 2 (eIF2) complex gamma subunit. Its guanine nucleotide exchange factor activity is repressed when bound to eIF2 complex phosphorylated on the alpha subunit, thereby limiting the amount of methionyl-initiator methionine tRNA available to the ribosome and consequently global translation is repressed. The chain is Translation initiation factor eIF2B subunit gamma from Caenorhabditis elegans.